We begin with the raw amino-acid sequence, 207 residues long: Superoxide dismutase [Mn] (207 aa).

Residues His-28, His-76, Asp-160, and His-164 each contribute to the Mn(2+) site.

It belongs to the iron/manganese superoxide dismutase family. Mn(2+) is required as a cofactor.

Its subcellular location is the secreted. The catalysed reaction is 2 superoxide + 2 H(+) = H2O2 + O2. In terms of biological role, destroys superoxide anion radicals which are normally produced within the cells and which are toxic to biological systems. The chain is Superoxide dismutase [Mn] (sodA) from Mycolicibacterium paratuberculosis (strain ATCC BAA-968 / K-10) (Mycobacterium paratuberculosis).